The sequence spans 284 residues: 4-diphosphocytidyl-2-C-methyl-D-erythritol kinase (284 aa).

The active site involves K14. 98–108 (PMGGGLGGGSS) serves as a coordination point for ATP. D140 is an active-site residue.

Belongs to the GHMP kinase family. IspE subfamily.

The catalysed reaction is 4-CDP-2-C-methyl-D-erythritol + ATP = 4-CDP-2-C-methyl-D-erythritol 2-phosphate + ADP + H(+). The protein operates within isoprenoid biosynthesis; isopentenyl diphosphate biosynthesis via DXP pathway; isopentenyl diphosphate from 1-deoxy-D-xylulose 5-phosphate: step 3/6. In terms of biological role, catalyzes the phosphorylation of the position 2 hydroxy group of 4-diphosphocytidyl-2C-methyl-D-erythritol. This Shewanella sp. (strain MR-4) protein is 4-diphosphocytidyl-2-C-methyl-D-erythritol kinase.